The primary structure comprises 253 residues: MAAAFRKAVKSRQREYRERSQPGFRKHLGLLEKKKDYKLRADDYRKKQEYLKALRKKALEKNPDEFYYKMTRVKLQDGVHIIKETKEEVTPEQLKLMRTQDVKYIEMKRVAEAKKIERLKSELHLLDFQGKQQNRHVFFFDTKKEVEQFDVAAHLQTAPELVDRVFNRPRIETLQKEKVKGVTNQTGLKRIAKERQKQYNCLTQRIEREKKLFVIAQKIQTRKDLMDKTQKVKVKKETVNSPAIYKFQSRRKR.

Residues 1–21 (MAAAFRKAVKSRQREYRERSQ) are disordered. Glycyl lysine isopeptide (Lys-Gly) (interchain with G-Cter in SUMO2) cross-links involve residues K74, K83, and K86. Position 90 is a phosphothreonine (T90). Residues K103, K120, K143, K144, K180, K211, K218, K235, and K236 each participate in a glycyl lysine isopeptide (Lys-Gly) (interchain with G-Cter in SUMO2) cross-link. S241 is modified (phosphoserine). A Glycyl lysine isopeptide (Lys-Gly) (interchain with G-Cter in SUMO2) cross-link involves residue K246.

This sequence belongs to the UTP11 family. Part of the small subunit (SSU) processome, composed of more than 70 proteins and the RNA chaperone small nucleolar RNA (snoRNA) U3.

Its subcellular location is the nucleus. It is found in the nucleolus. Functionally, part of the small subunit (SSU) processome, first precursor of the small eukaryotic ribosomal subunit. During the assembly of the SSU processome in the nucleolus, many ribosome biogenesis factors, an RNA chaperone and ribosomal proteins associate with the nascent pre-rRNA and work in concert to generate RNA folding, modifications, rearrangements and cleavage as well as targeted degradation of pre-ribosomal RNA by the RNA exosome. Involved in nucleolar processing of pre-18S ribosomal RNA. This chain is Probable U3 small nucleolar RNA-associated protein 11, found in Rattus norvegicus (Rat).